A 450-amino-acid chain; its full sequence is Probable ECA polymerase (450 aa).

A run of 11 helical transmembrane segments spans residues 6 to 26 (FSGLLVVWLLSTLFIATLTWF), 37 to 57 (VFFSLLFLLTFFFGFPLTSVL), 63 to 83 (VGVAPPEILLQALLSAACFYA), 120 to 140 (LMGIALVSVGIFFMHNGFLLF), 155 to 175 (GVALKRFFYFFIPAMLVIYFL), 181 to 201 (AWLFFLVSTVAFGLLTYMIVG), 207 to 227 (IIIAFAIFLFIGIIRGWISLW), 228 to 248 (MLVAAGVLGIVGMFWLALKRY), 341 to 361 (LVVMGGALFIPLGAVAVGLII), 378 to 398 (YKAAILHSFCFGAIFNMIVLA), and 410 to 430 (VFFLVIFGACLLVAKLLFWLF).

This sequence belongs to the WzyE family. In terms of assembly, probably part of a complex composed of WzxE, WzyE and WzzE.

The protein localises to the cell inner membrane. It participates in bacterial outer membrane biogenesis; enterobacterial common antigen biosynthesis. In terms of biological role, probably involved in the polymerization of enterobacterial common antigen (ECA) trisaccharide repeat units. The chain is Probable ECA polymerase from Citrobacter koseri (strain ATCC BAA-895 / CDC 4225-83 / SGSC4696).